A 250-amino-acid chain; its full sequence is Prophage antitermination protein Q homolog QuuQ (250 aa).

Belongs to the phage antitermination Q type 2 family.

In terms of biological role, positively regulate expression of some phage genes. Bacterial host RNA polymerase modified by antitermination proteins transcribes through termination sites that otherwise prevent expression of the regulated genes. In Escherichia coli (strain K12), this protein is Prophage antitermination protein Q homolog QuuQ (quuQ).